Reading from the N-terminus, the 591-residue chain is ATP-dependent RNA helicase DDX55 (591 aa).

Residues Trp-9 to Ser-37 carry the Q motif motif. Residues Ile-40 to Ile-223 enclose the Helicase ATP-binding domain. Ala-53 to Thr-60 is a binding site for ATP. Residues Asp-171–Asp-174 carry the DEAD box motif. The region spanning Lys-254–Asp-402 is the Helicase C-terminal domain. 2 disordered regions span residues Asp-482–Arg-559 and Glu-571–Asp-591. Basic and acidic residues predominate over residues Pro-485–Lys-513. Residues Phe-486–Glu-542 adopt a coiled-coil conformation. Residues Lys-514–Arg-538 are compositionally biased toward basic residues. Residues Lys-533 to Lys-562 are important for nuclear localization. Positions Ser-544–Leu-555 are enriched in acidic residues.

The protein belongs to the DEAD box helicase family. DDX55/SPB4 subfamily. As to quaternary structure, interacts with 28S rRNA. Interacts with double-stranded RNA substrates in vitro; the interaction stimulates ATPase activity.

It is found in the nucleus. The protein localises to the nucleoplasm. It catalyses the reaction ATP + H2O = ADP + phosphate + H(+). Its function is as follows. Probable ATP-binding RNA helicase. Has ATPase activity and is involved in the maturation of precursor large subunit rRNAs. The sequence is that of ATP-dependent RNA helicase DDX55 (DDX55) from Gallus gallus (Chicken).